A 198-amino-acid chain; its full sequence is Probable GTP-binding protein EngB (198 aa).

An EngB-type G domain is found at 22–195; the sequence is HRNEVAFVGR…IDKLFLEFAT (174 aa). GTP is bound by residues 30-37, 57-61, 75-78, 142-145, and 174-176; these read GRSNVGKS, GKTRL, DLPG, TKSD, and YSS. Residues serine 37 and threonine 59 each coordinate Mg(2+).

The protein belongs to the TRAFAC class TrmE-Era-EngA-EngB-Septin-like GTPase superfamily. EngB GTPase family. Mg(2+) serves as cofactor.

Necessary for normal cell division and for the maintenance of normal septation. This chain is Probable GTP-binding protein EngB, found in Clostridium botulinum (strain Eklund 17B / Type B).